The following is a 387-amino-acid chain: Succinate--CoA ligase [ADP-forming] subunit beta (387 aa).

Residues Lys46, 53-55, Glu99, Cys102, and Glu107 each bind ATP; that span reads GRG. Asn196 and Asp210 together coordinate Mg(2+). Residues Asn261 and 318-320 each bind substrate; that span reads GIV.

This sequence belongs to the succinate/malate CoA ligase beta subunit family. Heterotetramer of two alpha and two beta subunits. Mg(2+) is required as a cofactor.

The catalysed reaction is succinate + ATP + CoA = succinyl-CoA + ADP + phosphate. The enzyme catalyses GTP + succinate + CoA = succinyl-CoA + GDP + phosphate. The protein operates within carbohydrate metabolism; tricarboxylic acid cycle; succinate from succinyl-CoA (ligase route): step 1/1. Its function is as follows. Succinyl-CoA synthetase functions in the citric acid cycle (TCA), coupling the hydrolysis of succinyl-CoA to the synthesis of either ATP or GTP and thus represents the only step of substrate-level phosphorylation in the TCA. The beta subunit provides nucleotide specificity of the enzyme and binds the substrate succinate, while the binding sites for coenzyme A and phosphate are found in the alpha subunit. The protein is Succinate--CoA ligase [ADP-forming] subunit beta of Campylobacter hominis (strain ATCC BAA-381 / DSM 21671 / CCUG 45161 / LMG 19568 / NCTC 13146 / CH001A).